A 114-amino-acid polypeptide reads, in one-letter code: Iron-sulfur cluster assembly protein CyaY (114 aa).

Belongs to the frataxin family.

Functionally, involved in iron-sulfur (Fe-S) cluster assembly. May act as a regulator of Fe-S biogenesis. The polypeptide is Iron-sulfur cluster assembly protein CyaY (Ralstonia pickettii (strain 12J)).